Reading from the N-terminus, the 356-residue chain is 1-acyl-sn-glycerol-3-phosphate acyltransferase LPAT1, chloroplastic (356 aa).

The N-terminal 56 residues, 1-56, are a transit peptide targeting the chloroplast; it reads MDVASARSISSHPSYYGKPICSSQSSLIRISRDKVCCFGRISNGMTSFTTSLHAVP. A helical transmembrane segment spans residues 127–147; the sequence is GIFFCVVAGISATFLIVLMII. An HXXXXD motif motif is present at residues 202–207; that stretch reads HQSFLD. Residues 224 to 244 traverse the membrane as a helical segment; sequence TGIFVIPIIGWAMSMMGVVPL.

It belongs to the 1-acyl-sn-glycerol-3-phosphate acyltransferase family. In terms of tissue distribution, widely expressed. Expressed at higher level in leaves. Expressed at lower level in silique walls compared to leaves.

The protein localises to the plastid. It is found in the chloroplast membrane. The catalysed reaction is a fatty acyl-[ACP] + a 1-acyl-sn-glycero-3-phosphate = a 1,2-diacyl-sn-glycero-3-phosphate + holo-[ACP]. It catalyses the reaction a 1-acyl-sn-glycero-3-phosphate + an acyl-CoA = a 1,2-diacyl-sn-glycero-3-phosphate + CoA. It functions in the pathway phospholipid metabolism; CDP-diacylglycerol biosynthesis; CDP-diacylglycerol from sn-glycerol 3-phosphate: step 2/3. In terms of biological role, plastidial enzyme of the prokaryotic glycerol-3-phosphate pathway that converts lysophosphatidic acid (LPA) into phosphatidic acid by incorporating an acyl moiety at position sn-2. Utilizes palmitoyl-ACP (16:0-ACP) to produce phosphatidic acid containing a saturated group at position sn-2, which is characteristic of lipids synthesized by the prokaryotic pathway. In vitro, can use 16:0-CoA as acyl donor. Essential for embryo development during the transition from the globular to the heart stage when chloroplasts begin to form. In Arabidopsis thaliana (Mouse-ear cress), this protein is 1-acyl-sn-glycerol-3-phosphate acyltransferase LPAT1, chloroplastic.